The following is a 309-amino-acid chain: Mitogen-activated protein kinase kinase 8 (309 aa).

Positions 53-305 (LDRISVLGSG…ASQLLNHPFL (253 aa)) constitute a Protein kinase domain. Residues 59–67 (LGSGNGGTV) and Lys82 contribute to the ATP site. Asp167 (proton acceptor) is an active-site residue. A phosphoserine mark is found at Ser195 and Ser201. Residue Thr205 is modified to Phosphothreonine.

This sequence belongs to the protein kinase superfamily. STE Ser/Thr protein kinase family. MAP kinase kinase subfamily. In terms of processing, phosphorylation at Ser-195 and Ser-201 by MAP kinase kinase kinases positively regulates kinase activity.

It carries out the reaction L-seryl-[protein] + ATP = O-phospho-L-seryl-[protein] + ADP + H(+). The enzyme catalyses L-threonyl-[protein] + ATP = O-phospho-L-threonyl-[protein] + ADP + H(+). The catalysed reaction is L-tyrosyl-[protein] + ATP = O-phospho-L-tyrosyl-[protein] + ADP + H(+). The polypeptide is Mitogen-activated protein kinase kinase 8 (MKK8) (Arabidopsis thaliana (Mouse-ear cress)).